The primary structure comprises 630 residues: Putative polypeptide N-acetylgalactosaminyltransferase 10 (630 aa).

Over 1–6 (MNVDLR) the chain is Cytoplasmic. Residues 7–26 (LIVRLLLAILLTSLVTTILM) form a helical; Signal-anchor for type II membrane protein membrane-spanning segment. Residues 27–630 (GKQIHRRLVK…APYDPQREPH (604 aa)) lie on the Lumenal side of the membrane. Asparagine 72, asparagine 84, asparagine 146, and asparagine 168 each carry an N-linked (GlcNAc...) asparagine glycan. Cystine bridges form between cysteine 157–cysteine 386, cysteine 377–cysteine 456, and cysteine 496–cysteine 513. Residues 166 to 277 (LPNVTVIIAF…TNWLPPLLEP (112 aa)) form a catalytic subdomain A region. Substrate contacts are provided by aspartate 207 and arginine 238. Residue aspartate 261 coordinates Mn(2+). Serine 262 provides a ligand contact to substrate. Mn(2+) is bound at residue histidine 263. The segment at 333-394 (PYRTPVLSGA…PCARVGHIGK (62 aa)) is catalytic subdomain B. A substrate-binding site is contributed by tryptophan 363. Residue histidine 391 participates in Mn(2+) binding. The Ricin B-type lectin domain maps to 483 to 618 (FSGVIESVAF…NQLEQQWKVG (136 aa)). N-linked (GlcNAc...) asparagine glycosylation is present at asparagine 525. Intrachain disulfides connect cysteine 543–cysteine 559 and cysteine 586–cysteine 606.

The protein belongs to the glycosyltransferase 2 family. GalNAc-T subfamily. Requires Mn(2+) as cofactor. As to expression, during embryonic stages 9-11, weakly expressed in the mesoderm. During embryonic stages 12-13, very weak expression is observed in the somatic mesoderm region. No expression detected from stage 14-15. During embryonic stages 16-17, expressed in the epidermis and the antennomaxillary complex. In third instar larvae, expressed ubiquitously in wing, eye-antennal, leg and haltere imaginal disks.

It is found in the golgi apparatus membrane. The enzyme catalyses L-seryl-[protein] + UDP-N-acetyl-alpha-D-galactosamine = a 3-O-[N-acetyl-alpha-D-galactosaminyl]-L-seryl-[protein] + UDP + H(+). The catalysed reaction is L-threonyl-[protein] + UDP-N-acetyl-alpha-D-galactosamine = a 3-O-[N-acetyl-alpha-D-galactosaminyl]-L-threonyl-[protein] + UDP + H(+). The protein operates within protein modification; protein glycosylation. Functionally, may catalyze the initial reaction in O-linked oligosaccharide biosynthesis, the transfer of an N-acetyl-D-galactosamine residue to a serine or threonine residue on the protein receptor. This is Putative polypeptide N-acetylgalactosaminyltransferase 10 (pgant10) from Drosophila melanogaster (Fruit fly).